We begin with the raw amino-acid sequence, 214 residues long: 3-isopropylmalate dehydratase small subunit (214 aa).

This sequence belongs to the LeuD family. LeuD type 1 subfamily. In terms of assembly, heterodimer of LeuC and LeuD.

The catalysed reaction is (2R,3S)-3-isopropylmalate = (2S)-2-isopropylmalate. It participates in amino-acid biosynthesis; L-leucine biosynthesis; L-leucine from 3-methyl-2-oxobutanoate: step 2/4. Functionally, catalyzes the isomerization between 2-isopropylmalate and 3-isopropylmalate, via the formation of 2-isopropylmaleate. The polypeptide is 3-isopropylmalate dehydratase small subunit (Pseudomonas putida (strain ATCC 47054 / DSM 6125 / CFBP 8728 / NCIMB 11950 / KT2440)).